Consider the following 1775-residue polypeptide: ATP-dependent RNA helicase DEAH12, chloroplastic (1775 aa).

The N-terminal 33 residues, 1–33 (MRNSFPPSDGGRSATDRRQQSSHSSSTNRYNSR), are a transit peptide targeting the chloroplast. A disordered region spans residues 1 to 77 (MRNSFPPSDG…NPSSGYSPPV (77 aa)). Residues 21 to 34 (SSHSSSTNRYNSRS) are compositionally biased toward low complexity. Positions 35–60 (AQSSPPLNHRPTWNQQHSQYPNSNFP) are enriched in polar residues. Residues 316–480 (LKKIHREQIM…FFSCGILLVN (165 aa)) enclose the Helicase ATP-binding domain. 329 to 336 (GETGSGKS) contributes to the ATP binding site. Positions 427–430 (DEAH) match the DEAH box motif. The 167-residue stretch at 510 to 676 (DVVKMAVEIH…VALLRMLALG (167 aa)) folds into the Helicase C-terminal domain. Residues 1560 to 1767 (IEVECPICLS…EPCYAHLRTI (208 aa)) form a TRIAD supradomain region. Residues C1564, C1567, C1580, H1582, C1585, C1588, C1607, C1612, C1652, C1657, C1675, C1678, C1683, C1686, H1691, C1696, C1722, and C1725 each contribute to the Zn(2+) site. An RING-type 1 zinc finger spans residues 1564–1612 (CPICLSEVDDGYSLEGCSHLFCKACLLEQFEASMRNFDAFPILCSHIDC). The segment at 1631–1696 (DELFSASLSS…HLEYHPLITC (66 aa)) adopts an IBR-type zinc-finger fold. The segment at 1722 to 1750 (CPICKSTIEKTDGCNHMKCRCGKHICWTC) adopts an RING-type 2; atypical zinc-finger fold. C1735 is a catalytic residue. Zn(2+) is bound by residues C1740 and C1742.

It belongs to the DEAD box helicase family. DEAH subfamily.

It localises to the plastid. Its subcellular location is the chloroplast. The enzyme catalyses ATP + H2O = ADP + phosphate + H(+). This Arabidopsis thaliana (Mouse-ear cress) protein is ATP-dependent RNA helicase DEAH12, chloroplastic.